Here is a 51-residue protein sequence, read N- to C-terminus: Proteinase inhibitor PTI (51 aa).

Cystine bridges form between Cys-3-Cys-40, Cys-6-Cys-24, Cys-7-Cys-36, and Cys-13-Cys-49.

The protein belongs to the protease inhibitor I20 (potato type II proteinase inhibitor) family.

It localises to the secreted. This Solanum tuberosum (Potato) protein is Proteinase inhibitor PTI.